Here is a 1029-residue protein sequence, read N- to C-terminus: Carbamoyl phosphate synthase large chain (1029 aa).

Residues 1–402 (MPKRTDLQTI…SLQKALRSTE (402 aa)) form a carboxyphosphate synthetic domain region. ATP contacts are provided by R129, R169, G175, G176, E208, I210, E215, G241, V242, H243, Q285, and E299. In terms of domain architecture, ATP-grasp 1 spans 133–328 (QAAMKKIGVE…IAKIAALLAV (196 aa)). Mg(2+) is bound by residues Q285, E299, and N301. 3 residues coordinate Mn(2+): Q285, E299, and N301. The oligomerization domain stretch occupies residues 403–546 (SDVRGAFAEM…YSTYEWEDEV (144 aa)). Positions 547 to 929 (TPTDKPKVVI…AYYRAELGAK (383 aa)) are carbamoyl phosphate synthetic domain. The 193-residue stretch at 671–863 (NALCERLGLP…LAKYAARIAV (193 aa)) folds into the ATP-grasp 2 domain. ATP is bound by residues R707, Q747, L749, E754, G779, V780, H781, S782, Q822, and E834. Q822, E834, and N836 together coordinate Mg(2+). Residues Q822, E834, and N836 each contribute to the Mn(2+) site. The region spanning 930–1028 (SNLPLSGTAL…QAWQQREAAA (99 aa)) is the MGS-like domain. An allosteric domain region spans residues 930-1029 (SNLPLSGTAL…AWQQREAAAS (100 aa)).

Belongs to the CarB family. As to quaternary structure, composed of two chains; the small (or glutamine) chain promotes the hydrolysis of glutamine to ammonia, which is used by the large (or ammonia) chain to synthesize carbamoyl phosphate. Tetramer of heterodimers (alpha,beta)4. It depends on Mg(2+) as a cofactor. Mn(2+) is required as a cofactor.

It carries out the reaction hydrogencarbonate + L-glutamine + 2 ATP + H2O = carbamoyl phosphate + L-glutamate + 2 ADP + phosphate + 2 H(+). It catalyses the reaction hydrogencarbonate + NH4(+) + 2 ATP = carbamoyl phosphate + 2 ADP + phosphate + 2 H(+). The protein operates within amino-acid biosynthesis; L-arginine biosynthesis; carbamoyl phosphate from bicarbonate: step 1/1. It functions in the pathway pyrimidine metabolism; UMP biosynthesis via de novo pathway; (S)-dihydroorotate from bicarbonate: step 1/3. In terms of biological role, large subunit of the glutamine-dependent carbamoyl phosphate synthetase (CPSase). CPSase catalyzes the formation of carbamoyl phosphate from the ammonia moiety of glutamine, carbonate, and phosphate donated by ATP, constituting the first step of 2 biosynthetic pathways, one leading to arginine and/or urea and the other to pyrimidine nucleotides. The large subunit (synthetase) binds the substrates ammonia (free or transferred from glutamine from the small subunit), hydrogencarbonate and ATP and carries out an ATP-coupled ligase reaction, activating hydrogencarbonate by forming carboxy phosphate which reacts with ammonia to form carbamoyl phosphate. This Deinococcus geothermalis (strain DSM 11300 / CIP 105573 / AG-3a) protein is Carbamoyl phosphate synthase large chain.